The sequence spans 116 residues: Ribonuclease P protein component (116 aa).

The protein belongs to the RnpA family. Consists of a catalytic RNA component (M1 or rnpB) and a protein subunit.

It carries out the reaction Endonucleolytic cleavage of RNA, removing 5'-extranucleotides from tRNA precursor.. Functionally, RNaseP catalyzes the removal of the 5'-leader sequence from pre-tRNA to produce the mature 5'-terminus. It can also cleave other RNA substrates such as 4.5S RNA. The protein component plays an auxiliary but essential role in vivo by binding to the 5'-leader sequence and broadening the substrate specificity of the ribozyme. The sequence is that of Ribonuclease P protein component from Pseudanabaena sp. (strain PCC 6903).